The chain runs to 127 residues: Ribosome-binding factor A (127 aa).

This sequence belongs to the RbfA family. Monomer. Binds 30S ribosomal subunits, but not 50S ribosomal subunits or 70S ribosomes.

Its subcellular location is the cytoplasm. One of several proteins that assist in the late maturation steps of the functional core of the 30S ribosomal subunit. Associates with free 30S ribosomal subunits (but not with 30S subunits that are part of 70S ribosomes or polysomes). Required for efficient processing of 16S rRNA. May interact with the 5'-terminal helix region of 16S rRNA. This Nitrosococcus oceani (strain ATCC 19707 / BCRC 17464 / JCM 30415 / NCIMB 11848 / C-107) protein is Ribosome-binding factor A.